The primary structure comprises 483 residues: Shaker-related potassium channel tsha2 (483 aa).

At 1–165 the chain is on the cytoplasmic side; that stretch reads MTVVSCEIQD…YPESSGPARM (165 aa). A helical membrane pass occupies residues 166-186; sequence IAVVSVSVIVISIVIFCLETL. Over 187–220 the chain is Extracellular; the sequence is PQFREDTSANLPLSNHHTTNGTTLHKKPNLFTDP. Residues 221-241 form a helical membrane-spanning segment; the sequence is FFMVETLCIVWFSFEFLVRFL. Topologically, residues 242 to 252 are cytoplasmic; that stretch reads SCPSKPAFFKN. The S-palmitoyl cysteine moiety is linked to residue C243. Residues 253–273 form a helical membrane-spanning segment; that stretch reads AMNSIDILAIAPYFITLGLEL. At 274–324 the chain is on the extracellular side; the sequence is AEQQEAGSEQAMSLAILRVIRLVRVFRIFKLSRHSKGLQILGQTLHASISE. Residues 325–345 form a helical; Voltage-sensor membrane-spanning segment; the sequence is LGLLIFFLLIGVILFSSAVYF. At 346–353 the chain is on the cytoplasmic side; that stretch reads AEADDPES. Residues 354-374 traverse the membrane as a helical segment; sequence GFSSIPAAFWWAVVSMTTVGY. The Selectivity filter motif lies at 371 to 376; that stretch reads TVGYGD. Residues 375-385 lie on the Extracellular side of the membrane; the sequence is GDMCPVTIGGK. Residues 386–406 traverse the membrane as a helical segment; that stretch reads IVGSMCAIAGVLTIALPVPVI. Residues 407 to 483 lie on the Cytoplasmic side of the membrane; it reads VSNFNYFYHR…EHYTGKLTDV (77 aa). The residue at position 426 (Y426) is a Phosphotyrosine. Residue T430 is modified to Phosphothreonine. The span at 440–452 shows a compositional bias: polar residues; the sequence is EFKSTSDSRQSLT. Residues 440-459 form a disordered region; the sequence is EFKSTSDSRQSLTKSEDTEE. The short motif at 481–483 is the PDZ-binding element; sequence TDV.

Belongs to the potassium channel family. A (Shaker) (TC 1.A.1.2) subfamily. In terms of assembly, heterotetramer of potassium channel proteins. Binds PDZ domains of dlg1, dlg2 and dlg4. As to expression, expressed in oligodendrocytes and astrocytes.

It is found in the membrane. Functionally, mediates the voltage-dependent potassium ion permeability of excitable membranes. Assuming opened or closed conformations in response to the voltage difference across the membrane, the protein forms a potassium-selective channel through which potassium ions may pass in accordance with their electrochemical gradient. This is Shaker-related potassium channel tsha2 from Oncorhynchus mykiss (Rainbow trout).